Consider the following 285-residue polypeptide: Chitinase 4 (285 aa).

A signal peptide spans 1-27 (MAAKMATMVALVFGLALLLSAAAPAAA). A Chitin-binding type-1 domain is found at 28-62 (QNCGCQDGYCCSQWGYCGTTEAYCGQGCQSGPCWG). 7 disulfides stabilise this stretch: Cys30/Cys38, Cys32/Cys44, Cys37/Cys51, Cys55/Cys60, Cys104/Cys153, Cys166/Cys175, and Cys253/Cys285. Glu148 (proton donor) is an active-site residue.

It belongs to the glycosyl hydrolase 19 family. Chitinase class IV subfamily. In terms of tissue distribution, expressed at low levels in leaves, sheaths and meristems.

The enzyme catalyses Random endo-hydrolysis of N-acetyl-beta-D-glucosaminide (1-&gt;4)-beta-linkages in chitin and chitodextrins.. In terms of biological role, hydrolyzes chitin and may function in reproductive organs during embryogenesis and seed maturation. The polypeptide is Chitinase 4 (Cht4) (Oryza sativa subsp. japonica (Rice)).